Here is a 243-residue protein sequence, read N- to C-terminus: Uridylate kinase (243 aa).

15 to 18 (KMSG) serves as a coordination point for ATP. G57 contributes to the UMP binding site. ATP is bound by residues G58 and R62. UMP-binding positions include D77 and 138-145 (TGNPLVTT). Residues T165, N166, Y171, and D174 each coordinate ATP.

Belongs to the UMP kinase family. Homohexamer.

The protein resides in the cytoplasm. The enzyme catalyses UMP + ATP = UDP + ADP. Its pathway is pyrimidine metabolism; CTP biosynthesis via de novo pathway; UDP from UMP (UMPK route): step 1/1. With respect to regulation, inhibited by UTP. Catalyzes the reversible phosphorylation of UMP to UDP. This is Uridylate kinase from Coxiella burnetii (strain RSA 493 / Nine Mile phase I).